We begin with the raw amino-acid sequence, 408 residues long: MYDTGQEAPRCILVGRKTGREETSSLPELSLLVEELGYIPETILSFPLRTPERKFLFGPGQAEVVAREARMRGIELVVFDEDLTPAQQRNWEHLVKSRVMDRTEVIIEIFSRHARTKQAQLQTEKARLEYLLPRLRGAWSHLDRQRGGARGTRGEGERQIELDRRMILSRLARIRREMEAIERHQTTTRSRRLEAGIPRVSLVGYTNAGKSSLFTRLTGQAVRIQDRPFVTLDTTTRTCLIPGWGRVVVSDTVGFIQHLPHTLVDAFHATLEEVRDAHLLLEVVDLSSPNLLLHLSTTEEVLTEIGAHHIPRIRVYNKADRSSPHPLLPPSDHPEILVSAKTGEGIEGLLSLIVREMERHYPIETLELPYHRLGESHEVLSRAVIIHQEYTDVGLFVRYAPSVPSVHE.

Residues 198–361 (PRVSLVGYTN…LIVREMERHY (164 aa)) form the Hflx-type G domain. GTP-binding positions include 204–211 (GYTNAGKS), 229–233 (FVTLD), 251–254 (DTVG), 317–320 (NKAD), and 339–341 (SAK). The Mg(2+) site is built by S211 and T231.

This sequence belongs to the TRAFAC class OBG-HflX-like GTPase superfamily. HflX GTPase family. In terms of assembly, monomer. Associates with the 50S ribosomal subunit. Mg(2+) is required as a cofactor.

It is found in the cytoplasm. In terms of biological role, GTPase that associates with the 50S ribosomal subunit and may have a role during protein synthesis or ribosome biogenesis. This Spirochaeta thermophila (strain ATCC 49972 / DSM 6192 / RI 19.B1) protein is GTPase HflX.